The chain runs to 559 residues: Fanconi-associated nuclease 1 homolog (559 aa).

Residues E386, D507, E522, and V523 each contribute to the Mn(2+) site. A VRR-NUC domain is found at 443-555 (DGSYRDAIRC…MPVAVCYVRW (113 aa)).

It belongs to the FAN1 family. It depends on Mn(2+) as a cofactor. Mg(2+) is required as a cofactor.

It catalyses the reaction Hydrolytically removes 5'-nucleotides successively from the 3'-hydroxy termini of 3'-hydroxy-terminated oligonucleotides.. In terms of biological role, nuclease required for the repair of DNA interstrand cross-links (ICL). Acts as a 5'-3' exonuclease that anchors at a cut end of DNA and cleaves DNA successively at every third nucleotide, allowing to excise an ICL from one strand through flanking incisions. Also has endonuclease activity toward 5'-flaps. The sequence is that of Fanconi-associated nuclease 1 homolog from Pseudomonas aeruginosa (strain ATCC 15692 / DSM 22644 / CIP 104116 / JCM 14847 / LMG 12228 / 1C / PRS 101 / PAO1).